A 475-amino-acid chain; its full sequence is tRNA modification GTPase MnmE (475 aa).

Residues R32, E97, and K136 each contribute to the (6S)-5-formyl-5,6,7,8-tetrahydrofolate site. The TrmE-type G domain maps to 232 to 396 (GVATVIAGRP…LKSRMSSMVE (165 aa)). GTP is bound by residues 242-247 (NAGKST), 261-267 (SHMPGTT), 286-289 (DTAG), and 377-379 (SAR). 2 residues coordinate Mg(2+): S246 and T267. K475 is a binding site for (6S)-5-formyl-5,6,7,8-tetrahydrofolate.

This sequence belongs to the TRAFAC class TrmE-Era-EngA-EngB-Septin-like GTPase superfamily. TrmE GTPase family. Homodimer. Heterotetramer of two MnmE and two MnmG subunits. K(+) is required as a cofactor.

It is found in the cytoplasm. Exhibits a very high intrinsic GTPase hydrolysis rate. Involved in the addition of a carboxymethylaminomethyl (cmnm) group at the wobble position (U34) of certain tRNAs, forming tRNA-cmnm(5)s(2)U34. In Chlorobium phaeobacteroides (strain DSM 266 / SMG 266 / 2430), this protein is tRNA modification GTPase MnmE.